The following is a 905-amino-acid chain: FIGNL1-interacting regulator of recombination and mitosis (905 aa).

Phosphoserine occurs at positions 101 and 796. At Lys845 the chain carries N6-acetyllysine.

As to quaternary structure, interacts (via its N-terminal region) with PLK1; controls PLK1 kinase activity. Interacts (via the KVVXF motif) with PPP1CC; controls PLK1 kinase activity. Interacts with FIGNL1; may regulate homologous recombination. Phosphorylation at Ser-101 by PLK1 strengthens FIRRM-PLK1 interaction. Phosphorylation at Ser-796 by PLK1 negatively regulates its interaction with PPP1CC.

Its subcellular location is the chromosome. It localises to the centromere. The protein localises to the kinetochore. It is found in the nucleus. The protein resides in the midbody. Its subcellular location is the cytoplasm. It localises to the cytoskeleton. The protein localises to the spindle. Functionally, regulates PLK1 kinase activity at kinetochores and promotes faithful chromosome segregation in prometaphase by bridging kinase and phosphatase activities. Phosphorylation of FIRRM by PLK1 negatively regulates its interaction with the phosphatase, PPP1CC, thus creating a negative feedback loop for maintaining proper PLK1 kinase activity during mitosis. In complex with FIGL1 may regulate homologous recombination. This chain is FIGNL1-interacting regulator of recombination and mitosis, found in Rattus norvegicus (Rat).